We begin with the raw amino-acid sequence, 419 residues long: AT-rich binding protein (419 aa).

The segment at 29–52 adopts a C2H2-type 1 zinc-finger fold; that stretch reads IVCHTCQEELQTQDAFWKHIQDEH. The interval 121 to 179 is disordered; sequence LHEAQHQQQQQQQQHQQQQQQQQHQQQQQHQHHQHQQQQQHLHQQQQQQQQQQRDAAKE. 2 stretches are compositionally biased toward low complexity: residues 126–149 and 156–173; these read HQQQ…QQQQ and QQQQ…QQQQ. 2 consecutive C2H2-type zinc fingers follow at residues 352–376 and 382–405; these read YVCD…RVVH and FNCD…KKKH.

The protein resides in the nucleus. Functionally, may be a transcription factor for genes having (A+T) stretches in their promoter and/or enhancer regions. Binds to AT rich DNA. The polypeptide is AT-rich binding protein (Drosophila grimshawi (Hawaiian fruit fly)).